A 309-amino-acid polypeptide reads, in one-letter code: Gamma-hemolysin component A (309 aa).

Residues 1 to 29 (MIKNKILTATLAVGLIAPLANPFIEISKA) form the signal peptide.

Belongs to the aerolysin family. Toxicity requires sequential binding and synergistic association of a class S and a class F component which form heterooligomeric complexes. HlgA (class S) associates with HlgB (class F) thus forming an AB toxin in strains producing both gamma-hemolysins and leukocidins. HlgA and LukF-PV can also form a complex.

It is found in the secreted. Functionally, toxin that seems to act by forming pores in the membrane of the cell. Has a hemolytic and a leucotoxic activity. This is Gamma-hemolysin component A (hlgA) from Staphylococcus aureus (strain COL).